The chain runs to 176 residues: NAD(P)H-quinone oxidoreductase subunit 6, chloroplastic (176 aa).

Helical transmembrane passes span 10–30, 32–52, 61–81, 92–112, and 152–172; these read FLLV…VLLT, PIYS…FYIP, AQLL…VMFM, LWTV…VSLI, and FFLP…GAIA.

It belongs to the complex I subunit 6 family. In terms of assembly, NDH is composed of at least 16 different subunits, 5 of which are encoded in the nucleus.

It is found in the plastid. The protein localises to the chloroplast thylakoid membrane. The catalysed reaction is a plastoquinone + NADH + (n+1) H(+)(in) = a plastoquinol + NAD(+) + n H(+)(out). The enzyme catalyses a plastoquinone + NADPH + (n+1) H(+)(in) = a plastoquinol + NADP(+) + n H(+)(out). Functionally, NDH shuttles electrons from NAD(P)H:plastoquinone, via FMN and iron-sulfur (Fe-S) centers, to quinones in the photosynthetic chain and possibly in a chloroplast respiratory chain. The immediate electron acceptor for the enzyme in this species is believed to be plastoquinone. Couples the redox reaction to proton translocation, and thus conserves the redox energy in a proton gradient. This chain is NAD(P)H-quinone oxidoreductase subunit 6, chloroplastic (ndhG), found in Platanus occidentalis (Sycamore).